The primary structure comprises 337 residues: Phosphoribosylformylglycinamidine cyclo-ligase (337 aa).

It belongs to the AIR synthase family.

The protein localises to the cytoplasm. The enzyme catalyses 2-formamido-N(1)-(5-O-phospho-beta-D-ribosyl)acetamidine + ATP = 5-amino-1-(5-phospho-beta-D-ribosyl)imidazole + ADP + phosphate + H(+). It participates in purine metabolism; IMP biosynthesis via de novo pathway; 5-amino-1-(5-phospho-D-ribosyl)imidazole from N(2)-formyl-N(1)-(5-phospho-D-ribosyl)glycinamide: step 2/2. This Gloeobacter violaceus (strain ATCC 29082 / PCC 7421) protein is Phosphoribosylformylglycinamidine cyclo-ligase.